Reading from the N-terminus, the 445-residue chain is Tubby-like F-box protein 8 (445 aa).

Positions 56 to 102 (ESRWASLPPELLRDVIRRLEASESTWPSRKDVVSCAAVCKAWREMCK) constitute an F-box domain.

Belongs to the TUB family. In terms of tissue distribution, ubiquitous.

The polypeptide is Tubby-like F-box protein 8 (TULP8) (Oryza sativa subsp. japonica (Rice)).